The following is a 51-amino-acid chain: Large ribosomal subunit protein eL39 (51 aa).

Belongs to the eukaryotic ribosomal protein eL39 family.

The polypeptide is Large ribosomal subunit protein eL39 (Methanococcoides burtonii (strain DSM 6242 / NBRC 107633 / OCM 468 / ACE-M)).